The sequence spans 357 residues: tRNA-specific 2-thiouridylase MnmA (357 aa).

Residues 6–13 and Leu32 each bind ATP; that span reads AMSGGVDS. The active-site Nucleophile is the Cys101. A disulfide bridge links Cys101 with Cys193. Gly125 contributes to the ATP binding site. The interval 143-145 is interaction with tRNA; the sequence is KDQ. Cys193 acts as the Cysteine persulfide intermediate in catalysis.

This sequence belongs to the MnmA/TRMU family.

The protein localises to the cytoplasm. The catalysed reaction is S-sulfanyl-L-cysteinyl-[protein] + uridine(34) in tRNA + AH2 + ATP = 2-thiouridine(34) in tRNA + L-cysteinyl-[protein] + A + AMP + diphosphate + H(+). Catalyzes the 2-thiolation of uridine at the wobble position (U34) of tRNA, leading to the formation of s(2)U34. The protein is tRNA-specific 2-thiouridylase MnmA of Mycolicibacterium gilvum (strain PYR-GCK) (Mycobacterium gilvum (strain PYR-GCK)).